The following is a 305-amino-acid chain: Peroxisome assembly protein 26 (305 aa).

The tract at residues 1 to 20 (MKSDSSTSAAPLRGLGGPLR) is disordered. Residues 1–246 (MKSDSSTSAA…RQLWDSAVSH (246 aa)) are Cytoplasmic-facing. A helical; Signal-anchor for type II membrane protein membrane pass occupies residues 247-267 (FFSLPFKKSLLAALILCLLVV). Residues 268–305 (RFDPASPSSLHFLYKLAQLFRWIRKAAFSRLYQLRIRD) lie on the Peroxisomal matrix side of the membrane.

The protein belongs to the peroxin-26 family. Interacts (via its cytoplasmic domain) with PEX6; interaction is direct and is ATP-dependent. Interacts with PEX1; interaction is indirect and is mediated via interaction with PEX6. Widely expressed. Highly expressed in kidney, liver, brain and skeletal muscles. Expressed at intermediate level in pancreas, placenta and heart. Weakly expressed in lung.

The protein localises to the peroxisome membrane. In terms of biological role, peroxisomal docking factor that anchors PEX1 and PEX6 to peroxisome membranes. PEX26 is therefore required for the formation of the PEX1-PEX6 AAA ATPase complex, a complex that mediates the extraction of the PEX5 receptor from peroxisomal membrane. The sequence is that of Peroxisome assembly protein 26 from Homo sapiens (Human).